Here is a 902-residue protein sequence, read N- to C-terminus: MPFAEKKRRTYENAVKPLRKSRIYAPFRSIGHVSNAVPFDIEARGTHFLVTTSVGNTFQTYDCEKLNLLFVGKQLDKEITCLKSFKDFMLVAAGSKIFAYKRGKIIWDIDVEQEHGTVTHLDAFGEWIIACTSSRHVYVWKHASKYSVPELHTTFLPNTNADITSLLHPSTYLNKILLGFSDGALQIWNLRVSKRVHEFQEFFGDGITSLTQAPVLDVLAVGTISGRIVIFNLKNGSILMEFKQDGQVLSCSFRTDGTPILASSNPIGDLSFWDLSKRRIQNVTYNAHFGSLPKIQFLNGQPILVTAGPDNSLKEWIFDSMDGAPRILRSRNGHYEPPSFVKFYGKSVHFLISAATDRSLRAVSLYQDSQSTELSQGSVISKAKKLNVRPEELKLPEITALSSSNTREKYWDNVLTAHKNDSSARTWNWKSKTLGQHVLPTSDGTSVRSVCVSCCGNFGLIGSSKGVVDVYNMQSGIKRKSFGQSSLSGKPVTAVMLDNVNRILVTASLDGILKFWDFNKGNLIDSLDVGSSITHAIYQHSSDLVAVACDDFGIRIVDVQTRKIVRELWGHSNRLTSFDFSDTGRWLVTASLDGTIRTWDLPTGHLIDSISTPSVCTSLTFAPTGDYLATTHVDQVGISLWTNLSMFKHVSTKALRLDDVVEVSAPSVSGEKGISVVEAALNVESNAEDEEDISYRTMDQLDPNLQTLSKLPRTQWQTLINLEAIKARNAPKEVPKVPEKAPFFLPSLKDQSEATVPKQPIATEISKPTAVASIKVSGTEFSTLLHGNDDDAFFEYLKSLGPAKIDLEIRSLDAYPPYEEFILFINIMTRRLSKRRDFELVQACMSVFTKSHEDVLLMHDTPEDTVPVFESLKAWESVHKEENQRLLDLVGYCSGILSFMRT.

WD repeat units follow at residues 40–71, 80–110, 119–154, 164–198, 206–243, 249–284, 289–332, 339–373, 399–438, 447–481, 492–528, 533–568, 570–611, and 613–651; these read DIEA…LLFV, TCLK…WDID, THLD…LHTT, TSLL…RVHE, GITS…MEFK, LSCS…QNVT, FGSL…RSRN, SFVK…QSTE, TALS…GQHV, VRSV…KRKS, VTAV…DSLD, ITHA…VREL, GHSN…DSIS, and PSVC…KHVS.

As to quaternary structure, interacts with snoRNA U3. Interacts with MPP10. Component of the ribosomal small subunit (SSU) processome composed of at least 40 protein subunits and snoRNA U3.

It is found in the nucleus. The protein localises to the nucleolus. In terms of biological role, involved in nucleolar processing of pre-18S ribosomal RNA and ribosome assembly. In Schizosaccharomyces pombe (strain 972 / ATCC 24843) (Fission yeast), this protein is U3 small nucleolar RNA-associated protein 21 homolog.